A 163-amino-acid chain; its full sequence is Nucleotide-binding protein BLi01194 (163 aa).

The protein belongs to the YajQ family.

In terms of biological role, nucleotide-binding protein. This Bacillus licheniformis (strain ATCC 14580 / DSM 13 / JCM 2505 / CCUG 7422 / NBRC 12200 / NCIMB 9375 / NCTC 10341 / NRRL NRS-1264 / Gibson 46) protein is Nucleotide-binding protein BLi01194.